The following is a 660-amino-acid chain: Chaperone protein DnaK (660 aa).

The residue at position 201 (Thr-201) is a Phosphothreonine; by autocatalysis. The disordered stretch occupies residues 599 to 660 (EAMQAQSASA…ADVEIVDKPE (62 aa)). Residues 600 to 617 (AMQAQSASAAASSAANAQ) show a composition bias toward low complexity.

The protein belongs to the heat shock protein 70 family.

Acts as a chaperone. This is Chaperone protein DnaK from Chlamydia trachomatis serovar A (strain ATCC VR-571B / DSM 19440 / HAR-13).